A 156-amino-acid chain; its full sequence is Small ribosomal subunit protein eS19A (156 aa).

It belongs to the eukaryotic ribosomal protein eS19 family.

The sequence is that of Small ribosomal subunit protein eS19A (RpS19a) from Drosophila melanogaster (Fruit fly).